We begin with the raw amino-acid sequence, 274 residues long: Transmembrane O-methyltransferase (274 aa).

A helical transmembrane segment spans residues 14 to 34 (VGTMSPAIALAFLPLVVTLLV). S-adenosyl-L-methionine is bound by residues E120, 122–123 (GT), S128, E146, and S176.

Belongs to the class I-like SAM-binding methyltransferase superfamily. Cation-dependent O-methyltransferase family. As to quaternary structure, interacts with LHFPL5, PCDH15, TMC1, TMC2 and TMIE. Interacts directly with TMC1. The interaction of TOMT with TMC1 and TMC2 is required for the transportation of TMC1/2 into the stereocilia of hair cells.

Its subcellular location is the membrane. It localises to the cytoplasm. The protein localises to the endoplasmic reticulum. The catalysed reaction is a catechol + S-adenosyl-L-methionine = a guaiacol + S-adenosyl-L-homocysteine + H(+). In terms of biological role, catalyzes the O-methylation, and thereby the inactivation, of catecholamine neurotransmitters and catechol hormones. Required for auditory function. Component of the cochlear hair cell's mechanotransduction (MET) machinery. Involved in the assembly of the asymmetric tip-link MET complex. Required for transportation of TMC1 and TMC2 proteins into the mechanically sensitive stereocilia of the hair cells. The function in MET is independent of the enzymatic activity. This Propithecus coquereli (Coquerel's sifaka) protein is Transmembrane O-methyltransferase.